Reading from the N-terminus, the 89-residue chain is Small ribosomal subunit protein uS15 (89 aa).

Belongs to the universal ribosomal protein uS15 family. As to quaternary structure, part of the 30S ribosomal subunit. Forms a bridge to the 50S subunit in the 70S ribosome, contacting the 23S rRNA.

Its function is as follows. One of the primary rRNA binding proteins, it binds directly to 16S rRNA where it helps nucleate assembly of the platform of the 30S subunit by binding and bridging several RNA helices of the 16S rRNA. In terms of biological role, forms an intersubunit bridge (bridge B4) with the 23S rRNA of the 50S subunit in the ribosome. This is Small ribosomal subunit protein uS15 from Pseudomonas putida (strain GB-1).